The chain runs to 689 residues: Beta-galactosidase BbgII (689 aa).

The substrate site is built by arginine 122 and asparagine 160. The Proton donor role is filled by glutamate 161. Glutamate 320 acts as the Nucleophile in catalysis. Residues tryptophan 328 and 368-371 (EKWH) each bind substrate.

It belongs to the glycosyl hydrolase 42 family.

It carries out the reaction Hydrolysis of terminal non-reducing beta-D-galactose residues in beta-D-galactosides.. This is Beta-galactosidase BbgII from Bifidobacterium bifidum (strain DSM 20082 / JCM 1254 / BCRC 11844 / KCTC 3440 / E319f (Variant a)).